A 481-amino-acid polypeptide reads, in one-letter code: Histidine--tRNA ligase, cytoplasmic (481 aa).

The tract at residues 1–48 (MSEPVVDNVTNKVEKMEVKEKTSAPPKEKKEKKSNKVQLKTPKGTQDY) is disordered. A compositionally biased stretch (basic and acidic residues) spans 12–31 (KVEKMEVKEKTSAPPKEKKE).

The protein belongs to the class-II aminoacyl-tRNA synthetase family.

It is found in the cytoplasm. It carries out the reaction tRNA(His) + L-histidine + ATP = L-histidyl-tRNA(His) + AMP + diphosphate + H(+). In Dictyostelium discoideum (Social amoeba), this protein is Histidine--tRNA ligase, cytoplasmic (hisS).